The sequence spans 126 residues: Histone H2B type 3-B (126 aa).

A compositionally biased stretch (low complexity) spans 1–12; sequence MPDPSKSAPAPK. Residues 1–35 form a disordered region; it reads MPDPSKSAPAPKKGSKKAVTKAQKKDGKKRKRGRK. N-acetylproline is present on P2. K6 bears the N6-(2-hydroxyisobutyryl)lysine; alternate mark. The residue at position 6 (K6) is an N6-(beta-hydroxybutyryl)lysine; alternate. Residue K6 is modified to N6-acetyllysine; alternate. K6 carries the N6-butyryllysine; alternate modification. At K6 the chain carries N6-crotonyllysine; alternate. K6 carries the post-translational modification N6-lactoyllysine; alternate. K6 is covalently cross-linked (Glycyl lysine isopeptide (Lys-Gly) (interchain with G-Cter in SUMO2); alternate). S7 carries the ADP-ribosylserine modification. K12 bears the N6-(beta-hydroxybutyryl)lysine; alternate mark. 2 positions are modified to N6-acetyllysine; alternate: K12 and K13. N6-crotonyllysine; alternate is present on residues K12 and K13. Residue K12 is modified to N6-lactoyllysine; alternate. K13 carries the N6-(2-hydroxyisobutyryl)lysine; alternate modification. Phosphoserine; by STK4/MST1 is present on S15. N6-acetyllysine; alternate is present on residues K16, K17, K21, and K24. Residues K16, K17, K21, and K24 each carry the N6-crotonyllysine; alternate modification. K16, K17, K21, and K24 each carry N6-lactoyllysine; alternate. Residues K17 and K21 each carry the N6-(beta-hydroxybutyryl)lysine; alternate modification. K17 carries the N6-glutaryllysine; alternate modification. N6-(2-hydroxyisobutyryl)lysine; alternate is present on residues K21 and K24. Position 21 is an N6-butyryllysine; alternate (K21). K21 is covalently cross-linked (Glycyl lysine isopeptide (Lys-Gly) (interchain with G-Cter in SUMO2); alternate). At K25 the chain carries N6-(2-hydroxyisobutyryl)lysine. The residue at position 35 (K35) is an N6-(2-hydroxyisobutyryl)lysine; alternate. K35 carries the N6-(beta-hydroxybutyryl)lysine; alternate modification. Position 35 is an N6-crotonyllysine; alternate (K35). An N6-glutaryllysine; alternate modification is found at K35. An N6-succinyllysine; alternate modification is found at K35. K35 is covalently cross-linked (Glycyl lysine isopeptide (Lys-Gly) (interchain with G-Cter in ubiquitin); alternate). A PolyADP-ribosyl glutamic acid modification is found at E36. At S37 the chain carries Phosphoserine; by AMPK. N6-(2-hydroxyisobutyryl)lysine; alternate occurs at positions 44, 47, and 58. K44 is subject to N6-lactoyllysine; alternate. Residues K44 and K47 each carry the N6-glutaryllysine; alternate modification. K47 carries the N6-methyllysine; alternate modification. K58 carries the N6,N6-dimethyllysine; alternate modification. At R80 the chain carries Dimethylated arginine. K86 bears the N6-(2-hydroxyisobutyryl)lysine; alternate mark. K86 carries the post-translational modification N6-(beta-hydroxybutyryl)lysine; alternate. K86 carries the post-translational modification N6-acetyllysine; alternate. K86 is subject to N6-lactoyllysine; alternate. K86 bears the N6,N6,N6-trimethyllysine; alternate mark. R87 and R93 each carry omega-N-methylarginine. K109 is subject to N6-(2-hydroxyisobutyryl)lysine; alternate. An N6-lactoyllysine; alternate modification is found at K109. K109 carries the post-translational modification N6-glutaryllysine; alternate. Residue K109 is modified to N6-methyllysine; alternate. S113 carries O-linked (GlcNAc) serine glycosylation. Position 116 is a phosphothreonine (T116). Residues K117 and K121 each carry the N6-(2-hydroxyisobutyryl)lysine; alternate modification. An N6-(beta-hydroxybutyryl)lysine; alternate mark is found at K117 and K121. K117 and K121 each carry N6-lactoyllysine; alternate. 2 positions are modified to N6-glutaryllysine; alternate: K117 and K121. 2 positions are modified to N6-succinyllysine; alternate: K117 and K121. N6-malonyllysine; alternate is present on K117. K117 carries the post-translational modification N6-methylated lysine; alternate. A Glycyl lysine isopeptide (Lys-Gly) (interchain with G-Cter in ubiquitin); alternate cross-link involves residue K121.

This sequence belongs to the histone H2B family. The nucleosome is a histone octamer containing two molecules each of H2A, H2B, H3 and H4 assembled in one H3-H4 heterotetramer and two H2A-H2B heterodimers. The octamer wraps approximately 147 bp of DNA. Monoubiquitination at Lys-35 (H2BK34Ub) by the MSL1/MSL2 dimer is required for histone H3 'Lys-4' (H3K4me) and 'Lys-79' (H3K79me) methylation and transcription activation at specific gene loci, such as HOXA9 and MEIS1 loci. Similarly, monoubiquitination at Lys-121 (H2BK120Ub) by the RNF20/40 complex gives a specific tag for epigenetic transcriptional activation and is also prerequisite for histone H3 'Lys-4' and 'Lys-79' methylation. It also functions cooperatively with the FACT dimer to stimulate elongation by RNA polymerase II. H2BK120Ub also acts as a regulator of mRNA splicing: deubiquitination by USP49 is required for efficient cotranscriptional splicing of a large set of exons. In terms of processing, phosphorylation at Ser-37 (H2BS36ph) by AMPK in response to stress promotes transcription. Phosphorylated on Ser-15 (H2BS14ph) by STK4/MST1 during apoptosis; which facilitates apoptotic chromatin condensation. Also phosphorylated on Ser-15 in response to DNA double strand breaks (DSBs), and in correlation with somatic hypermutation and immunoglobulin class-switch recombination. Post-translationally, glcNAcylation at Ser-113 promotes monoubiquitination of Lys-121. It fluctuates in response to extracellular glucose, and associates with transcribed genes. ADP-ribosylated by PARP1 or PARP2 on Ser-7 (H2BS6ADPr) in response to DNA damage. H2BS6ADPr promotes recruitment of CHD1L. Poly ADP-ribosylation on Glu-36 (H2BE35ADPr) by PARP1 regulates adipogenesis: it inhibits phosphorylation at Ser-37 (H2BS36ph), thereby blocking expression of pro-adipogenetic genes. In terms of processing, crotonylation (Kcr) is specifically present in male germ cells and marks testis-specific genes in post-meiotic cells, including X-linked genes that escape sex chromosome inactivation in haploid cells. Crotonylation marks active promoters and enhancers and confers resistance to transcriptional repressors. It is also associated with post-meiotically activated genes on autosomes. Post-translationally, lactylated in macrophages by EP300/P300 by using lactoyl-CoA directly derived from endogenous or exogenous lactate, leading to stimulates gene transcription.

It is found in the nucleus. The protein localises to the chromosome. Its function is as follows. Core component of nucleosome. Nucleosomes wrap and compact DNA into chromatin, limiting DNA accessibility to the cellular machineries which require DNA as a template. Histones thereby play a central role in transcription regulation, DNA repair, DNA replication and chromosomal stability. DNA accessibility is regulated via a complex set of post-translational modifications of histones, also called histone code, and nucleosome remodeling. The polypeptide is Histone H2B type 3-B (Homo sapiens (Human)).